Here is a 1424-residue protein sequence, read N- to C-terminus: Putative disease resistance protein At3g14460 (1424 aa).

Residues 152–454 enclose the NB-ARC domain; that stretch reads WRQASRSRPD…AIDLLYQPRS (303 aa). 200-207 serves as a coordination point for ATP; it reads GMPGVGKT. 7 LRR repeats span residues 498–523, 552–571, 572–595, 597–618, 620–641, 642–665, and 806–830; these read VSGD…HFSF, PTSL…LLNA, LSGL…LKGL, LLRY…VCTL, NLQT…SIAE, LINL…IKKL, and LPSL…FFFG. 2 disordered regions span residues 911 to 977 and 1050 to 1070; these read FRRS…PKDR and IKSS…QYDD. Polar residues-rich tracts occupy residues 912–927 and 934–972; these read RRSL…SIPS and SSPT…SLSS. LRR repeat units lie at residues 1090-1114, 1118-1139, 1238-1262, 1264-1286, and 1310-1336; these read PQNL…LTES, LHEL…HPPT, TPKL…LFGL, SLLS…GFPS, and LENL…LLPK.

The protein belongs to the disease resistance NB-LRR family.

In terms of biological role, potential disease resistance protein. The protein is Putative disease resistance protein At3g14460 of Arabidopsis thaliana (Mouse-ear cress).